The sequence spans 750 residues: 1,4-alpha-glucan branching enzyme GlgB (750 aa).

D425 acts as the Nucleophile in catalysis. Catalysis depends on E478, which acts as the Proton donor.

It belongs to the glycosyl hydrolase 13 family. GlgB subfamily. As to quaternary structure, monomer.

The catalysed reaction is Transfers a segment of a (1-&gt;4)-alpha-D-glucan chain to a primary hydroxy group in a similar glucan chain.. Its pathway is glycan biosynthesis; glycogen biosynthesis. In terms of biological role, catalyzes the formation of the alpha-1,6-glucosidic linkages in glycogen by scission of a 1,4-alpha-linked oligosaccharide from growing alpha-1,4-glucan chains and the subsequent attachment of the oligosaccharide to the alpha-1,6 position. In Cupriavidus pinatubonensis (strain JMP 134 / LMG 1197) (Cupriavidus necator (strain JMP 134)), this protein is 1,4-alpha-glucan branching enzyme GlgB.